The sequence spans 485 residues: Cysteine--tRNA ligase (485 aa).

Cys28 lines the Zn(2+) pocket. The 'HIGH' region signature appears at 30-40; sequence MTVYDYCHLGH. Positions 212, 237, and 241 each coordinate Zn(2+). Positions 269–273 match the 'KMSKS' region motif; it reads KMSKS. Lys272 lines the ATP pocket.

Belongs to the class-I aminoacyl-tRNA synthetase family. In terms of assembly, monomer. It depends on Zn(2+) as a cofactor.

The protein localises to the cytoplasm. It carries out the reaction tRNA(Cys) + L-cysteine + ATP = L-cysteinyl-tRNA(Cys) + AMP + diphosphate. The chain is Cysteine--tRNA ligase from Bordetella bronchiseptica (strain ATCC BAA-588 / NCTC 13252 / RB50) (Alcaligenes bronchisepticus).